A 67-amino-acid chain; its full sequence is Small ribosomal subunit protein bS21 (67 aa).

The protein belongs to the bacterial ribosomal protein bS21 family.

This Rhodospirillum centenum (strain ATCC 51521 / SW) protein is Small ribosomal subunit protein bS21.